We begin with the raw amino-acid sequence, 507 residues long: MSQRQVLQVFEQYQKARTQFVQMVAELATRPQNIETLQNAGVMSLLRPLLLDVVPTIQQTAALALGRLANYNDDLAEAVVKGDILPQLVYSLAEQNRFYKKAAAFVLRAVGKHSPQLAQAIVDCGALDTLVICLEDFDPGVKEAAAWALGYIARHNTELSQAVVDAGAIPLLVLCIQEPEIALKRIAASALSDISKHSPELAQTVVDAGAIAHLAQMILNPDAKLKRQVLSALSQIAKHSVDLAEMVVEAEIFPVVLTCLKDKDEYVKKNACTLIREIAKHTPELSQLIVNAGGVAAVIDCIGSCKGNIRLPGIMMLGYVAAHSENLAMAVIISKGVPQLSICLSEEPEDHIKAAAAWALGQLGRHTPEHARAVAVTNTLPVLLSLYMSPESSEDLQLKSKKAIKNILQKCTYLPALEPFLYDAPPNILKHVVGQFSKVLPHDSKARRLFVTSGGLKKVQEIKAEPGSLLQEYINSINNCYPEEIVRYYSPGYSDTLLQRVDSYQPL.

8 ARM repeats span residues 31 to 70 (PQNIETLQNAGVMSLLRPLLLDVVPTIQQTAALALGRLAN), 73 to 112 (DDLAEAVVKGDILPQLVYSLAEQNRFYKKAAAFVLRAVGK), 115 to 154 (PQLAQAIVDCGALDTLVICLEDFDPGVKEAAAWALGYIAR), 157 to 196 (TELSQAVVDAGAIPLLVLCIQEPEIALKRIAASALSDISK), 199 to 238 (PELAQTVVDAGAIAHLAQMILNPDAKLKRQVLSALSQIAK), 241 to 280 (VDLAEMVVEAEIFPVVLTCLKDKDEYVKKNACTLIREIAK), 325 to 365 (ENLA…QLGR), and 402 to 441 (KAIKNILQKCTYLPALEPFLYDAPPNILKHVVGQFSKVLP).

Interacts with SPAG16 and SPAG17. As to expression, highly expressed in testis. Not detected in prostate, ovary, spleen, thymus, small intestine, colon and peripheral blood leukocytes.

The protein resides in the cytoplasm. It is found in the cytoskeleton. Its subcellular location is the cell projection. The protein localises to the cilium. It localises to the flagellum. The protein resides in the cilium axoneme. Functionally, important for structural integrity of the central apparatus in the sperm tail and for flagellar motility. The polypeptide is Sperm-associated antigen 6 (Spag6) (Mus musculus (Mouse)).